The chain runs to 242 residues: Small ribosomal subunit protein uS2 (242 aa).

Belongs to the universal ribosomal protein uS2 family.

In Neisseria gonorrhoeae (strain ATCC 700825 / FA 1090), this protein is Small ribosomal subunit protein uS2.